The chain runs to 139 residues: MAMTFHLDVVSAEEQMFSGTVQSIQVSGSEGELGIRPNHAPLLTAIKPGMIRIVKQHGEEEVIYLSGGVLEVQPGAVTVLADTAIRGSDLDEARALEAKRKAEAHMNSSHGDVDFAVASAELAKAIAKLRVIELTKNAM.

The protein belongs to the ATPase epsilon chain family. As to quaternary structure, F-type ATPases have 2 components, CF(1) - the catalytic core - and CF(0) - the membrane proton channel. CF(1) has five subunits: alpha(3), beta(3), gamma(1), delta(1), epsilon(1). CF(0) has three main subunits: a, b and c.

The protein localises to the cell inner membrane. Produces ATP from ADP in the presence of a proton gradient across the membrane. In Erwinia tasmaniensis (strain DSM 17950 / CFBP 7177 / CIP 109463 / NCPPB 4357 / Et1/99), this protein is ATP synthase epsilon chain.